The chain runs to 170 residues: NADH-quinone oxidoreductase subunit B (170 aa).

4 residues coordinate [4Fe-4S] cluster: Cys-37, Cys-38, Cys-102, and Cys-131.

The protein belongs to the complex I 20 kDa subunit family. In terms of assembly, NDH-1 is composed of 14 different subunits. Subunits NuoB, C, D, E, F, and G constitute the peripheral sector of the complex. Requires [4Fe-4S] cluster as cofactor.

The protein localises to the cell inner membrane. It catalyses the reaction a quinone + NADH + 5 H(+)(in) = a quinol + NAD(+) + 4 H(+)(out). In terms of biological role, NDH-1 shuttles electrons from NADH, via FMN and iron-sulfur (Fe-S) centers, to quinones in the respiratory chain. The immediate electron acceptor for the enzyme in this species is believed to be ubiquinone. Couples the redox reaction to proton translocation (for every two electrons transferred, four hydrogen ions are translocated across the cytoplasmic membrane), and thus conserves the redox energy in a proton gradient. In Geotalea uraniireducens (strain Rf4) (Geobacter uraniireducens), this protein is NADH-quinone oxidoreductase subunit B.